We begin with the raw amino-acid sequence, 424 residues long: Hemagglutinin-esterase (424 aa).

An N-terminal signal peptide occupies residues 1–16 (MFLLPRFVLVSCIIGS). The interval 7 to 127 (FVLVSCIIGS…SNDIWMQNKG (121 aa)) is esterase domain 1. The Virion surface segment spans residues 17–392 (LGFENPPTNV…PICVYDPLPL (376 aa)). The active-site Nucleophile is S40. Cysteines 44 and 65 form a disulfide. N54, N89, N153, N236, and N301 each carry an N-linked (GlcNAc...) asparagine; by host glycan. 3 disulfide bridges follow: C113–C162, C197–C276, and C205–C249. Positions 128–266 (LFYTQVYKNM…GNYLAISNEL (139 aa)) are receptor binding. An esterase domain 2 region spans residues 267–379 (LLTVPTKAIC…RCPTAADINT (113 aa)). C307 and C312 are oxidised to a cystine. An N-linked (GlcNAc...) asparagine; by host glycan is attached at N316. Catalysis depends on charge relay system residues D326 and H329. An intrachain disulfide couples C347 to C371. Residue N358 is glycosylated (N-linked (GlcNAc...) asparagine; by host). Residues 393–413 (ILLGILLGVAVIIIVVLLLYF) form a helical membrane-spanning segment. The Intravirion portion of the chain corresponds to 414 to 424 (MVDNGTRLHDA). The N-linked (GlcNAc...) asparagine; by host glycan is linked to N417.

The protein belongs to the influenza type C/coronaviruses hemagglutinin-esterase family. As to quaternary structure, homodimer; disulfide-linked. Forms a complex with the M protein in the pre-Golgi. Associates then with S-M complex to form a ternary complex S-M-HE. Post-translationally, N-glycosylated in the host RER.

It is found in the virion membrane. It localises to the host cell membrane. It carries out the reaction N-acetyl-9-O-acetylneuraminate + H2O = N-acetylneuraminate + acetate + H(+). The catalysed reaction is N-acetyl-4-O-acetylneuraminate + H2O = N-acetylneuraminate + acetate + H(+). Functionally, structural protein that makes short spikes at the surface of the virus. Contains receptor binding and receptor-destroying activities. Mediates de-O-acetylation of N-acetyl-4-O-acetylneuraminic acid, which is probably the receptor determinant recognized by the virus on the surface of erythrocytes and susceptible cells. This receptor-destroying activity is important for virus release as it probably helps preventing self-aggregation and ensures the efficient spread of the progeny virus from cell to cell. May serve as a secondary viral attachment protein for initiating infection, the spike protein being the major one. May become a target for both the humoral and the cellular branches of the immune system. The polypeptide is Hemagglutinin-esterase (Bovine coronavirus (strain G95) (BCoV)).